A 1064-amino-acid polypeptide reads, in one-letter code: Carbamoyl phosphate synthase pyrimidine-specific large chain (1064 aa).

Residues 1-401 (MPKRRDIETI…SLLKAVRSLE (401 aa)) are carboxyphosphate synthetic domain. The ATP site is built by arginine 129, arginine 169, glycine 175, glycine 176, arginine 208, isoleucine 210, glycine 241, isoleucine 242, histidine 243, glutamine 284, and glutamate 298. Positions 133–327 (RALMNELGEP…IAKLAAKIAV (195 aa)) constitute an ATP-grasp 1 domain. 3 residues coordinate Mg(2+): glutamine 284, glutamate 298, and asparagine 300. Mn(2+) contacts are provided by glutamine 284, glutamate 298, and asparagine 300. An oligomerization domain region spans residues 402–546 (IGVHHLELNE…YSTYEEENES (145 aa)). The interval 547-929 (IVTEKPSVIV…ALYKGLVASG (383 aa)) is carbamoyl phosphate synthetic domain. The ATP-grasp 2 domain occupies 671–861 (EQALSELGIP…MANLATKAIL (191 aa)). Positions 707, 746, 748, 752, 777, 778, 779, 780, 820, and 832 each coordinate ATP. Glutamine 820, glutamate 832, and asparagine 834 together coordinate Mg(2+). Mn(2+)-binding residues include glutamine 820, glutamate 832, and asparagine 834. An MGS-like domain is found at 930-1064 (IQIQPHGAVL…TAMTEGLVRS (135 aa)). Positions 930-1064 (IQIQPHGAVL…TAMTEGLVRS (135 aa)) are allosteric domain.

This sequence belongs to the CarB family. As to quaternary structure, composed of two chains; the small (or glutamine) chain promotes the hydrolysis of glutamine to ammonia, which is used by the large (or ammonia) chain to synthesize carbamoyl phosphate. Tetramer of heterodimers (alpha,beta)4. The cofactor is Mg(2+). Mn(2+) is required as a cofactor.

It carries out the reaction hydrogencarbonate + L-glutamine + 2 ATP + H2O = carbamoyl phosphate + L-glutamate + 2 ADP + phosphate + 2 H(+). The enzyme catalyses hydrogencarbonate + NH4(+) + 2 ATP = carbamoyl phosphate + 2 ADP + phosphate + 2 H(+). It participates in amino-acid biosynthesis; L-arginine biosynthesis; carbamoyl phosphate from bicarbonate: step 1/1. It functions in the pathway pyrimidine metabolism; UMP biosynthesis via de novo pathway; (S)-dihydroorotate from bicarbonate: step 1/3. Small subunit of the glutamine-dependent carbamoyl phosphate synthetase (CPSase). CPSase catalyzes the formation of carbamoyl phosphate from the ammonia moiety of glutamine, carbonate, and phosphate donated by ATP, constituting the first step of the biosynthetic pathway leading to pyrimidine nucleotides. The large subunit (synthetase) binds the substrates ammonia (free or transferred from glutamine from the small subunit), hydrogencarbonate and ATP and carries out an ATP-coupled ligase reaction, activating hydrogencarbonate by forming carboxy phosphate which reacts with ammonia to form carbamoyl phosphate. This chain is Carbamoyl phosphate synthase pyrimidine-specific large chain (pyrAB), found in Geobacillus stearothermophilus (Bacillus stearothermophilus).